Consider the following 188-residue polypeptide: Protein GrpE (188 aa).

Residues 1 to 16 are compositionally biased toward basic and acidic residues; the sequence is MEERNEQVVEEVKEAQ. The disordered stretch occupies residues 1–31; sequence MEERNEQVVEEVKEAQVEEAVTPENSEETVE.

Belongs to the GrpE family. As to quaternary structure, homodimer.

It is found in the cytoplasm. Functionally, participates actively in the response to hyperosmotic and heat shock by preventing the aggregation of stress-denatured proteins, in association with DnaK and GrpE. It is the nucleotide exchange factor for DnaK and may function as a thermosensor. Unfolded proteins bind initially to DnaJ; upon interaction with the DnaJ-bound protein, DnaK hydrolyzes its bound ATP, resulting in the formation of a stable complex. GrpE releases ADP from DnaK; ATP binding to DnaK triggers the release of the substrate protein, thus completing the reaction cycle. Several rounds of ATP-dependent interactions between DnaJ, DnaK and GrpE are required for fully efficient folding. In Bacillus cereus (strain G9842), this protein is Protein GrpE.